The sequence spans 164 residues: MARGINKVILVGNLGNDPDIKYTQGGMTITTISLATTSVRKDKEGNTQERTEWHRVKFFGKLGEIAGEYLRKGSQCYIEGSIRYDKFTGQDGQERYVTEIVADEMQMLGGRSDGGGMGGGGERPQRQTSQRQDYAPRRQARQPSQSPQSSPPPMDDFADDDIPF.

In terms of domain architecture, SSB spans 5–109 (INKVILVGNL…IVADEMQMLG (105 aa)). Residues 105 to 164 (MQMLGGRSDGGGMGGGGERPQRQTSQRQDYAPRRQARQPSQSPQSSPPPMDDFADDDIPF) are disordered. Gly residues predominate over residues 111-122 (RSDGGGMGGGGE). The Important for interaction with partner proteins signature appears at 159–164 (DDDIPF).

Homotetramer.

Plays an important role in DNA replication, recombination and repair. Binds to ssDNA and to an array of partner proteins to recruit them to their sites of action during DNA metabolism. The sequence is that of Single-stranded DNA-binding protein 2 (ssb2) from Xylella fastidiosa (strain 9a5c).